The primary structure comprises 128 residues: Large-conductance mechanosensitive channel (128 aa).

Transmembrane regions (helical) follow at residues 10 to 30 and 76 to 96; these read FAMR…SAFG and GLFI…FMMI.

It belongs to the MscL family. In terms of assembly, homopentamer.

The protein resides in the cell inner membrane. Its function is as follows. Channel that opens in response to stretch forces in the membrane lipid bilayer. May participate in the regulation of osmotic pressure changes within the cell. This is Large-conductance mechanosensitive channel from Haemophilus influenzae (strain PittEE).